We begin with the raw amino-acid sequence, 255 residues long: Phosphoribosyl isomerase A (255 aa).

Catalysis depends on Asp-21, which acts as the Proton acceptor. Asp-140 functions as the Proton donor in the catalytic mechanism.

It belongs to the HisA/HisF family.

The protein localises to the cytoplasm. It catalyses the reaction 1-(5-phospho-beta-D-ribosyl)-5-[(5-phospho-beta-D-ribosylamino)methylideneamino]imidazole-4-carboxamide = 5-[(5-phospho-1-deoxy-D-ribulos-1-ylimino)methylamino]-1-(5-phospho-beta-D-ribosyl)imidazole-4-carboxamide. It carries out the reaction N-(5-phospho-beta-D-ribosyl)anthranilate = 1-(2-carboxyphenylamino)-1-deoxy-D-ribulose 5-phosphate. It participates in amino-acid biosynthesis; L-histidine biosynthesis; L-histidine from 5-phospho-alpha-D-ribose 1-diphosphate: step 4/9. Its pathway is amino-acid biosynthesis; L-tryptophan biosynthesis; L-tryptophan from chorismate: step 3/5. Functionally, involved in both the histidine and tryptophan biosynthetic pathways. In Mycolicibacterium vanbaalenii (strain DSM 7251 / JCM 13017 / BCRC 16820 / KCTC 9966 / NRRL B-24157 / PYR-1) (Mycobacterium vanbaalenii), this protein is Phosphoribosyl isomerase A.